Consider the following 340-residue polypeptide: Dual specificity protein phosphatase 12 (340 aa).

Position 1 is an N-acetylmethionine (Met1). Residues 26-171 form the Tyrosine-protein phosphatase domain; that stretch reads QMLEVQPGLY…LKLYQAMGYE (146 aa). The active-site Phosphocysteine intermediate is Cys115. 116–121 serves as a coordination point for substrate; that stretch reads HAGVSR. Ser335 is modified (phosphoserine).

Belongs to the protein-tyrosine phosphatase family. Non-receptor class dual specificity subfamily. Monomer. The cofactor is Zn(2+). Ubiquitous, highest expression in spleen, testis, ovary, and peripheral blood leukocytes and lower expression in liver and lung.

The protein localises to the nucleus. It is found in the cytoplasm. The protein resides in the cytosol. The catalysed reaction is O-phospho-L-tyrosyl-[protein] + H2O = L-tyrosyl-[protein] + phosphate. It catalyses the reaction O-phospho-L-seryl-[protein] + H2O = L-seryl-[protein] + phosphate. It carries out the reaction O-phospho-L-threonyl-[protein] + H2O = L-threonyl-[protein] + phosphate. Functionally, dual specificity phosphatase; can dephosphorylate both phosphotyrosine and phosphoserine or phosphothreonine residues. Can dephosphorylate glucokinase (in vitro). Has phosphatase activity with the synthetic substrate 6,8-difluoro-4-methylumbelliferyl phosphate and other in vitro substrates. The polypeptide is Dual specificity protein phosphatase 12 (DUSP12) (Homo sapiens (Human)).